We begin with the raw amino-acid sequence, 338 residues long: Glycerol-3-phosphate dehydrogenase [NAD(P)+] (338 aa).

NADPH is bound by residues W20 and K110. Residues K110, G141, and S143 each coordinate sn-glycerol 3-phosphate. A145 provides a ligand contact to NADPH. The sn-glycerol 3-phosphate site is built by K197, D250, S260, R261, and N262. Residue K197 is the Proton acceptor of the active site. R261 is a binding site for NADPH. An NADPH-binding site is contributed by E287.

This sequence belongs to the NAD-dependent glycerol-3-phosphate dehydrogenase family.

Its subcellular location is the cytoplasm. It catalyses the reaction sn-glycerol 3-phosphate + NAD(+) = dihydroxyacetone phosphate + NADH + H(+). The catalysed reaction is sn-glycerol 3-phosphate + NADP(+) = dihydroxyacetone phosphate + NADPH + H(+). The protein operates within membrane lipid metabolism; glycerophospholipid metabolism. Its function is as follows. Catalyzes the reduction of the glycolytic intermediate dihydroxyacetone phosphate (DHAP) to sn-glycerol 3-phosphate (G3P), the key precursor for phospholipid synthesis. In Aster yellows witches'-broom phytoplasma (strain AYWB), this protein is Glycerol-3-phosphate dehydrogenase [NAD(P)+].